Consider the following 64-residue polypeptide: MAKAKGARIVITLECTECRSNTAKRSPGVSRYTTQKNRRNTTERLEIKKFCPHCNKHTAHKEIK.

This sequence belongs to the bacterial ribosomal protein bL33 family.

In Synechococcus elongatus (strain ATCC 33912 / PCC 7942 / FACHB-805) (Anacystis nidulans R2), this protein is Large ribosomal subunit protein bL33.